The primary structure comprises 292 residues: uncharacterized protein (292 aa).

K8 participates in a covalent cross-link: Glycyl lysine isopeptide (Lys-Gly) (interchain with G-Cter in SUMO2). Positions 47–67 are disordered; that stretch reads TKRKMLPSSSSRMRSDGFDEE. K76 is covalently cross-linked (Glycyl lysine isopeptide (Lys-Gly) (interchain with G-Cter in SUMO2)). Phosphothreonine is present on N94. A phosphoserine mark is found at K96 and F97. The interval 122 to 292 is disordered; it reads ETDSDQQDIT…ERSAESSEDD (171 aa). Position 123 is a phosphothreonine (T123). Phosphoserine is present on residues S125 and D126. A compositionally biased stretch (polar residues) spans 128–140; sequence QDITNGKKTSPQV. Positions 147–173 are enriched in basic residues; it reads SRKHKKSKKSHKKKQKKRSHKKQKKSK. Over residues 180-194 the composition is skewed to polar residues; sequence TADSSSEFSEETGAS. Basic residues-rich tracts occupy residues 197 to 215 and 247 to 259; these read RKGKQPHKRKKKSRKKSLK and KKTKRKKREKKAH. Residues 280–292 are compositionally biased toward basic and acidic residues; sequence ATDERSAESSEDD.

This is an uncharacterized protein from Homo sapiens (Human).